Consider the following 260-residue polypeptide: Hydroxyacylglutathione hydrolase (260 aa).

Zn(2+) contacts are provided by His61, His63, Asp65, His66, His119, Asp138, and His176.

This sequence belongs to the metallo-beta-lactamase superfamily. Glyoxalase II family. In terms of assembly, monomer. The cofactor is Zn(2+).

The enzyme catalyses an S-(2-hydroxyacyl)glutathione + H2O = a 2-hydroxy carboxylate + glutathione + H(+). It functions in the pathway secondary metabolite metabolism; methylglyoxal degradation; (R)-lactate from methylglyoxal: step 2/2. In terms of biological role, thiolesterase that catalyzes the hydrolysis of S-D-lactoyl-glutathione to form glutathione and D-lactic acid. This is Hydroxyacylglutathione hydrolase from Brucella anthropi (strain ATCC 49188 / DSM 6882 / CCUG 24695 / JCM 21032 / LMG 3331 / NBRC 15819 / NCTC 12168 / Alc 37) (Ochrobactrum anthropi).